Reading from the N-terminus, the 277-residue chain is MEIISGSQIAQEIRQKLKEKNEREGISPCLAMILVGGQKEDLHYVGLKEKAATATGGKSRLLHLPEDTSQQELMAKIAELNQDEQVDGILLQLPLPAALEEQTDEILAAIRPDKDVDGFSLVNRGRMSGDRPGFISCAALACLEVIERFFPSLAGKKAVLVGDSFDLIIPLATIMIKRACQLSVLPSYEPGLASGADILVVEKGRAGIVQAEGLAPGVLIIDAGFYWGAGGVCGNVDRAALERQGFEARLLPVPGGMGPILIAKLMENLAQAARQKR.

NADP(+) is bound by residues Gly-162–Ser-164 and Ser-187.

It belongs to the tetrahydrofolate dehydrogenase/cyclohydrolase family. As to quaternary structure, homodimer.

It carries out the reaction (6R)-5,10-methylene-5,6,7,8-tetrahydrofolate + NADP(+) = (6R)-5,10-methenyltetrahydrofolate + NADPH. The catalysed reaction is (6R)-5,10-methenyltetrahydrofolate + H2O = (6R)-10-formyltetrahydrofolate + H(+). The protein operates within one-carbon metabolism; tetrahydrofolate interconversion. In terms of biological role, catalyzes the oxidation of 5,10-methylenetetrahydrofolate to 5,10-methenyltetrahydrofolate and then the hydrolysis of 5,10-methenyltetrahydrofolate to 10-formyltetrahydrofolate. The protein is Bifunctional protein FolD 1 of Syntrophomonas wolfei subsp. wolfei (strain DSM 2245B / Goettingen).